Consider the following 399-residue polypeptide: Tyrosine--tRNA ligase 2 (399 aa).

A 'HIGH' region motif is present at residues 43-52 (PTAPDLHLGH). The short motif at 227-231 (KMSKS) is the 'KMSKS' region element. K230 provides a ligand contact to ATP. The 61-residue stretch at 338–398 (ITLLDLCSVA…IGKRYKFRIG (61 aa)) folds into the S4 RNA-binding domain.

The protein belongs to the class-I aminoacyl-tRNA synthetase family. TyrS type 2 subfamily. As to quaternary structure, homodimer.

The protein localises to the cytoplasm. The enzyme catalyses tRNA(Tyr) + L-tyrosine + ATP = L-tyrosyl-tRNA(Tyr) + AMP + diphosphate + H(+). Functionally, catalyzes the attachment of tyrosine to tRNA(Tyr) in a two-step reaction: tyrosine is first activated by ATP to form Tyr-AMP and then transferred to the acceptor end of tRNA(Tyr). The sequence is that of Tyrosine--tRNA ligase 2 from Photorhabdus laumondii subsp. laumondii (strain DSM 15139 / CIP 105565 / TT01) (Photorhabdus luminescens subsp. laumondii).